We begin with the raw amino-acid sequence, 463 residues long: RuvB-like helicase 2 (463 aa).

Residue 76 to 83 (GPPSTGKT) coordinates ATP.

It belongs to the RuvB family. May form heterododecamers with RVB1. Component of the SWR1 chromatin remodeling complex, the INO80 chromatin remodeling complex, and of the R2TP complex.

It is found in the nucleus. It catalyses the reaction ATP + H2O = ADP + phosphate + H(+). DNA helicase which participates in several chromatin remodeling complexes, including the SWR1 and the INO80 complexes. The SWR1 complex mediates the ATP-dependent exchange of histone H2A for the H2A variant HZT1 leading to transcriptional regulation of selected genes by chromatin remodeling. The INO80 complex remodels chromatin by shifting nucleosomes and is involved in DNA repair. Also involved in pre-rRNA processing. This is RuvB-like helicase 2 (RVB2) from Cryptococcus neoformans var. neoformans serotype D (strain JEC21 / ATCC MYA-565) (Filobasidiella neoformans).